A 174-amino-acid chain; its full sequence is Superoxide dismutase [Cu-Zn] (174 aa).

An N-terminal signal peptide occupies residues 1–20 (MMKSLFIASTMVLMAFPAFA). The Cu cation site is built by H68, H70, and H93. C75 and C170 are joined by a disulfide. The Zn(2+) site is built by H93, H102, H110, and D113. A Cu cation-binding site is contributed by H148.

This sequence belongs to the Cu-Zn superoxide dismutase family. As to quaternary structure, homodimer. The cofactor is Cu cation. Zn(2+) serves as cofactor.

It is found in the periplasm. The catalysed reaction is 2 superoxide + 2 H(+) = H2O2 + O2. Destroys radicals which are normally produced within the cells and which are toxic to biological systems. This chain is Superoxide dismutase [Cu-Zn] (sodC), found in Brucella melitensis biotype 1 (strain ATCC 23456 / CCUG 17765 / NCTC 10094 / 16M).